The chain runs to 467 residues: Constitutive acid phosphatase (467 aa).

Positions 1 to 17 (MFKSVVYSVLAAALVNA) are cleaved as a signal peptide. Histidine 75 serves as the catalytic Nucleophile. Asparagine 97, asparagine 103, asparagine 162, asparagine 192, asparagine 250, and asparagine 315 each carry an N-linked (GlcNAc...) asparagine glycan. Aspartate 338 serves as the catalytic Proton donor. 6 N-linked (GlcNAc...) asparagine glycosylation sites follow: asparagine 356, asparagine 390, asparagine 439, asparagine 445, asparagine 456, and asparagine 461.

It belongs to the histidine acid phosphatase family.

It carries out the reaction a phosphate monoester + H2O = an alcohol + phosphate. This is Constitutive acid phosphatase (PHO3) from Saccharomyces cerevisiae (strain ATCC 204508 / S288c) (Baker's yeast).